A 339-amino-acid chain; its full sequence is Leucine-rich repeat-containing protein 59 (339 aa).

Over 1–282 the chain is Cytoplasmic; that stretch reads MARGGGKSGS…KHSWSRSVLR (282 aa). 4 LRR repeats span residues 10–31, 40–61, 63–84, and 86–107; these read SLKD…SEVP, KATV…FCSL, HLVK…FGRL, and SLQH…FAQL. Positions 181-254 form a coiled coil; it reads MKVIQSEQDR…EMEKKTKKET (74 aa). The tract at residues 186–275 is disordered; sequence SEQDRERQRK…PPQPARHKHS (90 aa). The span at 187–256 shows a compositional bias: basic and acidic residues; it reads EQDRERQRKL…EKKTKKETVQ (70 aa). Residues 283–300 traverse the membrane as a helical segment; it reads ALLLVLLCILCTLAVCKL. Topologically, residues 301 to 339 are lumenal; the sequence is TELQHQPLCVSVNTLYEDVVAAVQNHKTLQNMLQQNSQQ.

As to quaternary structure, interacts with SGO1.

It is found in the microsome membrane. The protein resides in the endoplasmic reticulum membrane. The protein localises to the nucleus envelope. Functionally, required for nuclear import of FGF1. This is Leucine-rich repeat-containing protein 59 (LRRC59) from Gallus gallus (Chicken).